The chain runs to 197 residues: Pyridoxal 5'-phosphate synthase subunit PdxT (197 aa).

Position 52-54 (52-54 (GES)) interacts with L-glutamine. C83 functions as the Nucleophile in the catalytic mechanism. L-glutamine is bound by residues R115 and 142 to 143 (IR). Active-site charge relay system residues include H178 and E180.

It belongs to the glutaminase PdxT/SNO family. As to quaternary structure, in the presence of PdxS, forms a dodecamer of heterodimers. Only shows activity in the heterodimer.

It carries out the reaction aldehydo-D-ribose 5-phosphate + D-glyceraldehyde 3-phosphate + L-glutamine = pyridoxal 5'-phosphate + L-glutamate + phosphate + 3 H2O + H(+). The enzyme catalyses L-glutamine + H2O = L-glutamate + NH4(+). It functions in the pathway cofactor biosynthesis; pyridoxal 5'-phosphate biosynthesis. In terms of biological role, catalyzes the hydrolysis of glutamine to glutamate and ammonia as part of the biosynthesis of pyridoxal 5'-phosphate. The resulting ammonia molecule is channeled to the active site of PdxS. The protein is Pyridoxal 5'-phosphate synthase subunit PdxT of Korarchaeum cryptofilum (strain OPF8).